A 329-amino-acid polypeptide reads, in one-letter code: GTPase Obg (329 aa).

In terms of domain architecture, Obg spans 1–159 (MQFIDQAIID…WSLQLELKLL (159 aa)). Residues 160–328 (AEVGIIGLPN…LLSSIWNELG (169 aa)) form the OBG-type G domain. Residues 166-173 (GLPNAGKS), 191-195 (FTTLI), 213-216 (DIPG), 280-283 (NKKE), and 309-311 (SAV) each bind ATP. S173 and T193 together coordinate Mg(2+).

Belongs to the TRAFAC class OBG-HflX-like GTPase superfamily. OBG GTPase family. In terms of assembly, monomer. Mg(2+) is required as a cofactor.

The protein resides in the cytoplasm. Functionally, an essential GTPase which binds GTP, GDP and possibly (p)ppGpp with moderate affinity, with high nucleotide exchange rates and a fairly low GTP hydrolysis rate. Plays a role in control of the cell cycle, stress response, ribosome biogenesis and in those bacteria that undergo differentiation, in morphogenesis control. The protein is GTPase Obg of Prochlorococcus marinus (strain NATL2A).